The following is a 496-amino-acid chain: Fibronectin type III and SPRY domain-containing protein 1 (496 aa).

Positions 4–99 (QREALRKIIT…ALESSEELLE (96 aa)) form a coiled coil. Residues 105–162 (LQAMDREDFPQAAKQIKDGVTMAPAFRLSLKAKVSDNMSHLMVDFAQERQMLQALKFL) enclose the COS domain. Positions 164 to 268 (VPSAPVIDLA…EPVTLETPAF (105 aa)) constitute a Fibronectin type-III domain. One can recognise a B30.2/SPRY domain in the interval 268–477 (FMFRLDASTS…VTTGLQVPSS (210 aa)). The tract at residues 301 to 336 (KAREKDGKGRTASPINSPARGTPSPKRMPSGRGGRD) is disordered. 2 positions are modified to omega-N-methylarginine: arginine 310 and arginine 320.

In terms of assembly, oligomerization is required for binding to microtubules.

The protein localises to the cytoplasm. Its subcellular location is the cytoskeleton. It is found in the microtubule organizing center. It localises to the centrosome. The protein resides in the nucleus. The protein localises to the cleavage furrow. May be involved in microtubule organization and stabilization. The polypeptide is Fibronectin type III and SPRY domain-containing protein 1 (FSD1) (Macaca fascicularis (Crab-eating macaque)).